Reading from the N-terminus, the 449-residue chain is MKFTQRLSLRVRLTLIFLILASVTWLLSSFVAWKQTTDNVDELFDTQLMLFAKRLSTLDLNEINAADRMAQTPNRLKHGHVDDDALTFAIFTHDGRMVLNDGDNGEDIPYSYQREGFADGQLVGEDDPWRFVWMTSPDGKYRIVVGQEWEYREDMALAIVAGQLIPWLVALPIMLIIMMVLLGRELAPLNKLALALRMRDPDSEKPLNATGVPSEVRPLVESLNQLFARTHAMMVRERRFTSDAAHELRSPLTALKVQTEVAQLSDDDPQARKKALLQLHSGIDRATRLVDQLLTLSRLDSLDNLQDVAEIPLEDLLQSSVMDIYHTAQQAKIDVRLTLNAHSIKRTGQPLLLSLLVRNLLDNAVRYSPQGSVVDVTLNADNFIVRDNGPGVTPEALARIGERFYRPPGQTATGSGLGLSIVQRIAKLHGMNVEFGNAEQGGFEAKVSW.

At 1–12 (MKFTQRLSLRVR) the chain is on the cytoplasmic side. Residues 13 to 33 (LTLIFLILASVTWLLSSFVAW) form a helical membrane-spanning segment. Topologically, residues 34–156 (KQTTDNVDEL…QEWEYREDMA (123 aa)) are periplasmic. The chain crosses the membrane as a helical span at residues 157-177 (LAIVAGQLIPWLVALPIMLII). Residues 178-449 (MMVLLGRELA…QGGFEAKVSW (272 aa)) are Cytoplasmic-facing. One can recognise a Histidine kinase domain in the interval 243-449 (DAAHELRSPL…QGGFEAKVSW (207 aa)). His-246 bears the Phosphohistidine; by autocatalysis mark.

It is found in the cell inner membrane. The catalysed reaction is ATP + protein L-histidine = ADP + protein N-phospho-L-histidine.. Its function is as follows. Member of a two-component regulatory system QseB/QseC. Activates the flagella regulon by activating transcription of FlhDC. May activate QseB by phosphorylation. The sequence is that of Sensor protein QseC (qseC) from Escherichia coli (strain K12).